The following is a 118-amino-acid chain: Small ribosomal subunit protein uS13 (118 aa).

The segment at Gly94–Lys118 is disordered.

Belongs to the universal ribosomal protein uS13 family. As to quaternary structure, part of the 30S ribosomal subunit. Forms a loose heterodimer with protein S19. Forms two bridges to the 50S subunit in the 70S ribosome.

Its function is as follows. Located at the top of the head of the 30S subunit, it contacts several helices of the 16S rRNA. In the 70S ribosome it contacts the 23S rRNA (bridge B1a) and protein L5 of the 50S subunit (bridge B1b), connecting the 2 subunits; these bridges are implicated in subunit movement. Contacts the tRNAs in the A and P-sites. In Erwinia tasmaniensis (strain DSM 17950 / CFBP 7177 / CIP 109463 / NCPPB 4357 / Et1/99), this protein is Small ribosomal subunit protein uS13.